The following is a 249-amino-acid chain: Proteasome subunit alpha 2 (249 aa).

M1 carries the N-acetylmethionine modification.

This sequence belongs to the peptidase T1A family. The 20S proteasome core is composed of 14 alpha and 14 beta subunits that assemble into four stacked heptameric rings, resulting in a barrel-shaped structure. The two inner rings, each composed of seven catalytic beta subunits, are sandwiched by two outer rings, each composed of seven alpha subunits. H.volcanii produces at least 2 types of 20S proteasomes: an alpha1-beta proteasome and a proteasome containing all three subunits (alpha1, alpha2, and beta) that appears to be asymmetrical with homo-oligomeric alpha1 and alpha2 rings positioned on separate ends. The catalytic chamber with the active sites is on the inside of the barrel. Has probably a gated structure, the ends of the cylinder being occluded by the N-termini of the alpha-subunits. Is likely capped at one or both ends by the proteasome regulatory ATPase, PAN.

It is found in the cytoplasm. Its activity is regulated as follows. The formation of the proteasomal ATPase PAN-20S proteasome complex, via the docking of the C-termini of PAN into the intersubunit pockets in the alpha-rings, triggers opening of the gate for substrate entry. Interconversion between the open-gate and close-gate conformations leads to a dynamic regulation of the 20S proteasome proteolysis activity. Component of the proteasome core, a large protease complex with broad specificity involved in protein degradation. The H.volcanii alpha1-beta-alpha2 proteasome is able to cleave oligopeptides after Tyr and thus displays chymotrypsin-like activity. The polypeptide is Proteasome subunit alpha 2 (Haloferax volcanii (strain ATCC 29605 / DSM 3757 / JCM 8879 / NBRC 14742 / NCIMB 2012 / VKM B-1768 / DS2) (Halobacterium volcanii)).